A 146-amino-acid polypeptide reads, in one-letter code: Large-conductance mechanosensitive channel (146 aa).

Transmembrane regions (helical) follow at residues 12–32 (AFAM…GGAF) and 88–108 (LQAT…IKLI).

It belongs to the MscL family. As to quaternary structure, homopentamer.

The protein localises to the cell inner membrane. Its function is as follows. Channel that opens in response to stretch forces in the membrane lipid bilayer. May participate in the regulation of osmotic pressure changes within the cell. The protein is Large-conductance mechanosensitive channel of Bacteroides fragilis (strain ATCC 25285 / DSM 2151 / CCUG 4856 / JCM 11019 / LMG 10263 / NCTC 9343 / Onslow / VPI 2553 / EN-2).